Here is a 124-residue protein sequence, read N- to C-terminus: Late histone H2B.2.2 (124 aa).

Residues 1-32 form a disordered region; the sequence is MPAKQTSGKGAKKAGKAKGRPSGASKTRRRKR. Basic residues predominate over residues 10 to 19; the sequence is GAKKAGKAKG. Ser111 is a glycosylation site (O-linked (GlcNAc) serine). A Glycyl lysine isopeptide (Lys-Gly) (interchain with G-Cter in ubiquitin) cross-link involves residue Lys119.

The protein belongs to the histone H2B family. The nucleosome is a histone octamer containing two molecules each of H2A, H2B, H3 and H4 assembled in one H3-H4 heterotetramer and two H2A-H2B heterodimers. The octamer wraps approximately 147 bp of DNA. Monoubiquitination of Lys-119 gives a specific tag for epigenetic transcriptional activation and is also prerequisite for histone H3 'Lys-4' and 'Lys-79' methylation. Post-translationally, glcNAcylation at Ser-111 promotes monoubiquitination of Lys-119. It fluctuates in response to extracellular glucose, and associates with transcribed genes.

It is found in the nucleus. It localises to the chromosome. Core component of nucleosome. Nucleosomes wrap and compact DNA into chromatin, limiting DNA accessibility to the cellular machineries which require DNA as a template. Histones thereby play a central role in transcription regulation, DNA repair, DNA replication and chromosomal stability. DNA accessibility is regulated via a complex set of post-translational modifications of histones, also called histone code, and nucleosome remodeling. The chain is Late histone H2B.2.2 from Psammechinus miliaris (Green sea urchin).